The chain runs to 101 residues: MEPVDPRLEPWNHPGSQPKTACNNCYCKRCCYHCLYCFTKKGLGISYGRKKRSQRRRTPQSSKSHQDLIPEQPLSQQQGDQTGQKKQKEALESKTEADPCD.

Basic and acidic residues predominate over residues 1-10 (MEPVDPRLEP). The tract at residues 1–20 (MEPVDPRLEPWNHPGSQPKT) is disordered. The tract at residues 1–24 (MEPVDPRLEPWNHPGSQPKTACNN) is interaction with human CREBBP. The transactivation stretch occupies residues 1 to 48 (MEPVDPRLEPWNHPGSQPKTACNNCYCKRCCYHCLYCFTKKGLGISYG). The Zn(2+) site is built by C22, C25, and C27. A cysteine-rich region spans residues 22–37 (CNNCYCKRCCYHCLYC). Residue K28 is modified to N6-acetyllysine; by host PCAF. 4 residues coordinate Zn(2+): C30, H33, C34, and C37. The tract at residues 38 to 48 (FTKKGLGISYG) is core. Basic residues predominate over residues 48 to 58 (GRKKRSQRRRT). Residues 48–101 (GRKKRSQRRRTPQSSKSHQDLIPEQPLSQQQGDQTGQKKQKEALESKTEADPCD) form a disordered region. The Nuclear localization signal, RNA-binding (TAR), and protein transduction signature appears at 49–57 (RKKRSQRRR). The interaction with the host capping enzyme RNGTT stretch occupies residues 49-86 (RKKRSQRRRTPQSSKSHQDLIPEQPLSQQQGDQTGQKK). 2 positions are modified to N6-acetyllysine; by host EP300 and GCN5L2: K50 and K51. An Asymmetric dimethylarginine; by host PRMT6 modification is found at R52. Over residues 86–101 (KQKEALESKTEADPCD) the composition is skewed to basic and acidic residues.

The protein belongs to the lentiviruses Tat family. Interacts with host CCNT1. Associates with the P-TEFb complex composed at least of Tat, P-TEFb (CDK9 and CCNT1), TAR RNA, RNA Pol II. Recruits the HATs CREBBP, TAF1/TFIID, EP300, PCAF and GCN5L2. Interacts with host KAT5/Tip60; this interaction targets the latter to degradation. Interacts with the host deacetylase SIRT1. Interacts with host capping enzyme RNGTT; this interaction stimulates RNGTT. Binds to host KDR, and to the host integrins ITGAV/ITGB3 and ITGA5/ITGB1. Interacts with host KPNB1/importin beta-1 without previous binding to KPNA1/importin alpha-1. Interacts with EIF2AK2. Interacts with host nucleosome assembly protein NAP1L1; this interaction may be required for the transport of Tat within the nucleus, since the two proteins interact at the nuclear rim. Interacts with host C1QBP/SF2P32; this interaction involves lysine-acetylated Tat. Interacts with the host chemokine receptors CCR2, CCR3 and CXCR4. Interacts with host DPP4/CD26; this interaction may trigger an anti-proliferative effect. Interacts with host LDLR. Interacts with the host extracellular matrix metalloproteinase MMP1. Interacts with host PRMT6; this interaction mediates Tat's methylation. Interacts with, and is ubiquitinated by MDM2/Hdm2. Interacts with host PSMC3 and HTATIP2. Interacts with STAB1; this interaction may overcome SATB1-mediated repression of IL2 and IL2RA (interleukin) in T cells by binding to the same domain than HDAC1. Interacts (when acetylated) with human CDK13, thereby increasing HIV-1 mRNA splicing and promoting the production of the doubly spliced HIV-1 protein Nef. Interacts with host TBP; this interaction modulates the activity of transcriptional pre-initiation complex. Interacts with host RELA. Interacts with host PLSCR1; this interaction negatively regulates Tat transactivation activity by altering its subcellular distribution. Asymmetrical arginine methylation by host PRMT6 seems to diminish the transactivation capacity of Tat and affects the interaction with host CCNT1. Post-translationally, acetylation by EP300, CREBBP, GCN5L2/GCN5 and PCAF regulates the transactivation activity of Tat. EP300-mediated acetylation of Lys-50 promotes dissociation of Tat from the TAR RNA through the competitive binding to PCAF's bromodomain. In addition, the non-acetylated Tat's N-terminus can also interact with PCAF. PCAF-mediated acetylation of Lys-28 enhances Tat's binding to CCNT1. Lys-50 is deacetylated by SIRT1. In terms of processing, polyubiquitination by host MDM2 does not target Tat to degradation, but activates its transactivation function and fosters interaction with CCNT1 and TAR RNA. Phosphorylated by EIF2AK2 on serine and threonine residues adjacent to the basic region important for TAR RNA binding and function. Phosphorylation of Tat by EIF2AK2 is dependent on the prior activation of EIF2AK2 by dsRNA.

The protein resides in the host nucleus. Its subcellular location is the host nucleolus. It localises to the host cytoplasm. The protein localises to the secreted. Its function is as follows. Transcriptional activator that increases RNA Pol II processivity, thereby increasing the level of full-length viral transcripts. Recognizes a hairpin structure at the 5'-LTR of the nascent viral mRNAs referred to as the transactivation responsive RNA element (TAR) and recruits the cyclin T1-CDK9 complex (P-TEFb complex) that will in turn hyperphosphorylate the RNA polymerase II to allow efficient elongation. The CDK9 component of P-TEFb and other Tat-activated kinases hyperphosphorylate the C-terminus of RNA Pol II that becomes stabilized and much more processive. Other factors such as HTATSF1/Tat-SF1, SUPT5H/SPT5, and HTATIP2 are also important for Tat's function. Besides its effect on RNA Pol II processivity, Tat induces chromatin remodeling of proviral genes by recruiting the histone acetyltransferases (HATs) CREBBP, EP300 and PCAF to the chromatin. This also contributes to the increase in proviral transcription rate, especially when the provirus integrates in transcriptionally silent region of the host genome. To ensure maximal activation of the LTR, Tat mediates nuclear translocation of NF-kappa-B by interacting with host RELA. Through its interaction with host TBP, Tat may also modulate transcription initiation. Tat can reactivate a latently infected cell by penetrating in it and transactivating its LTR promoter. In the cytoplasm, Tat is thought to act as a translational activator of HIV-1 mRNAs. Functionally, extracellular circulating Tat can be endocytosed by surrounding uninfected cells via the binding to several surface receptors such as CD26, CXCR4, heparan sulfate proteoglycans (HSPG) or LDLR. Neurons are rarely infected, but they internalize Tat via their LDLR. Through its interaction with nuclear HATs, Tat is potentially able to control the acetylation-dependent cellular gene expression. Modulates the expression of many cellular genes involved in cell survival, proliferation or in coding for cytokines or cytokine receptors. Tat plays a role in T-cell and neurons apoptosis. Tat induced neurotoxicity and apoptosis probably contribute to neuroAIDS. Circulating Tat also acts as a chemokine-like and/or growth factor-like molecule that binds to specific receptors on the surface of the cells, affecting many cellular pathways. In the vascular system, Tat binds to ITGAV/ITGB3 and ITGA5/ITGB1 integrins dimers at the surface of endothelial cells and competes with bFGF for heparin-binding sites, leading to an excess of soluble bFGF. The protein is Protein Tat of Homo sapiens (Human).